A 178-amino-acid chain; its full sequence is Large ribosomal subunit protein uL6 (178 aa).

Belongs to the universal ribosomal protein uL6 family. In terms of assembly, part of the 50S ribosomal subunit.

Functionally, this protein binds to the 23S rRNA, and is important in its secondary structure. It is located near the subunit interface in the base of the L7/L12 stalk, and near the tRNA binding site of the peptidyltransferase center. The polypeptide is Large ribosomal subunit protein uL6 (Streptococcus gordonii (strain Challis / ATCC 35105 / BCRC 15272 / CH1 / DL1 / V288)).